The following is a 455-amino-acid chain: Argininosuccinate lyase (455 aa).

It belongs to the lyase 1 family. Argininosuccinate lyase subfamily.

The protein resides in the cytoplasm. The catalysed reaction is 2-(N(omega)-L-arginino)succinate = fumarate + L-arginine. It participates in amino-acid biosynthesis; L-arginine biosynthesis; L-arginine from L-ornithine and carbamoyl phosphate: step 3/3. This Shewanella baltica (strain OS195) protein is Argininosuccinate lyase.